A 1083-amino-acid polypeptide reads, in one-letter code: Probable arabinosyltransferase B (1083 aa).

Helical transmembrane passes span 23 to 45 (VARWVAAIAGLIGFVSSVVTPLL), 222 to 239 (FAMMLAIITTVGALVALW), 252 to 274 (LIPARWSMFTLVDVAVIFGFLLW), 331 to 350 (SMWIRLPDLICGVACWLLLS), 357 to 379 (LGPAIVGFKPALWAAGLVLLAAW), 421 to 443 (TAAFTIGIQPTGLIAVAALLAGG), 456 to 478 (AVGAWPLVAPLLAAGTVVLTVVF), 525 to 542 (FGFLITALCLFTAVLITL), 555 to 572 (AWRLIGTILGTMFFLTFA), 576 to 598 (WVHHFGLFAALGAAVAALTTVLV), 611 to 633 (AFLAALLFVMTLCFATTNGWWYV), 648 to 670 (DGITFSTIFFILFAIVALYAYYL), and 690 to 712 (FWAPIPFAAGLMTLVFIGSMVAG).

The protein belongs to the emb family.

The protein resides in the cell membrane. Its function is as follows. Arabinosyl transferase responsible for the polymerization of arabinose into the arabinan of arabinogalactan. The sequence is that of Probable arabinosyltransferase B (embB) from Mycobacterium leprae (strain TN).